Consider the following 453-residue polypeptide: tRNA modification GTPase MnmE (453 aa).

(6S)-5-formyl-5,6,7,8-tetrahydrofolate contacts are provided by Arg-22, Glu-79, and Lys-119. The region spanning 215–376 is the TrmE-type G domain; it reads GMKVVIAGRP…LKQHLKSLMG (162 aa). A K(+)-binding site is contributed by Asn-225. Residues 225–230, 244–250, 269–272, and 334–337 each bind GTP; these read NAGKSS, TEIAGTT, DTAG, and NKAD. Ser-229 contributes to the Mg(2+) binding site. Residues Thr-244, Ile-246, and Thr-249 each coordinate K(+). Thr-250 contributes to the Mg(2+) binding site. Lys-453 is a binding site for (6S)-5-formyl-5,6,7,8-tetrahydrofolate.

It belongs to the TRAFAC class TrmE-Era-EngA-EngB-Septin-like GTPase superfamily. TrmE GTPase family. As to quaternary structure, homodimer. Heterotetramer of two MnmE and two MnmG subunits. It depends on K(+) as a cofactor.

The protein resides in the cytoplasm. Exhibits a very high intrinsic GTPase hydrolysis rate. Involved in the addition of a carboxymethylaminomethyl (cmnm) group at the wobble position (U34) of certain tRNAs, forming tRNA-cmnm(5)s(2)U34. This chain is tRNA modification GTPase MnmE, found in Shewanella baltica (strain OS195).